Consider the following 255-residue polypeptide: Triosephosphate isomerase (255 aa).

Position 9 to 11 (9 to 11) interacts with substrate; that stretch reads NWK. Histidine 95 functions as the Electrophile in the catalytic mechanism. The Proton acceptor role is filled by glutamate 167. Substrate contacts are provided by residues glycine 173, serine 212, and 233–234; that span reads GG.

This sequence belongs to the triosephosphate isomerase family. Homodimer.

Its subcellular location is the cytoplasm. The enzyme catalyses D-glyceraldehyde 3-phosphate = dihydroxyacetone phosphate. The protein operates within carbohydrate biosynthesis; gluconeogenesis. It functions in the pathway carbohydrate degradation; glycolysis; D-glyceraldehyde 3-phosphate from glycerone phosphate: step 1/1. In terms of biological role, involved in the gluconeogenesis. Catalyzes stereospecifically the conversion of dihydroxyacetone phosphate (DHAP) to D-glyceraldehyde-3-phosphate (G3P). In Salmonella dublin (strain CT_02021853), this protein is Triosephosphate isomerase.